A 78-amino-acid chain; its full sequence is Large ribosomal subunit protein bL28 (78 aa).

A disordered region spans residues 1-25 (MSRVCQVTGKRPAVGNNRSHAKNAT).

The protein belongs to the bacterial ribosomal protein bL28 family.

The polypeptide is Large ribosomal subunit protein bL28 (Vibrio cholerae serotype O1 (strain ATCC 39541 / Classical Ogawa 395 / O395)).